Consider the following 883-residue polypeptide: Copper-transporting ATPase PAA2, chloroplastic (883 aa).

The N-terminal 65 residues, 1 to 65 (MASNLLRFPL…TQSFESTESS (65 aa)), are a transit peptide targeting the chloroplast. In terms of domain architecture, HMA spans 76 to 146 (TPILLDVSGM…RLTESGFEAK (71 aa)). Cysteine 87 and cysteine 90 together coordinate Cu cation. A run of 6 helical transmembrane segments spans residues 179 to 199 (VAFA…HILH), 209 to 229 (GIWD…GALL), 250 to 270 (MNSL…ISLV), 274 to 294 (LEWD…VLLG), 445 to 465 (AIAG…FAFW), and 499 to 519 (VLVV…ILIG). The active-site 4-aspartylphosphate intermediate is aspartate 548. 761–768 (GDGINDAP) is a binding site for ATP. Mg(2+)-binding residues include aspartate 762 and aspartate 766. Transmembrane regions (helical) follow at residues 822 to 842 (LAWA…VLLP) and 846 to 866 (FAMT…FVVS).

It belongs to the cation transport ATPase (P-type) (TC 3.A.3) family. Type IB subfamily. In terms of tissue distribution, expressed in the shoots only and not in the roots.

It is found in the plastid. It localises to the chloroplast thylakoid membrane. It catalyses the reaction Cu(2+)(in) + ATP + H2O = Cu(2+)(out) + ADP + phosphate + H(+). In terms of biological role, mediates copper transfer across the chloroplast thylakoid membrane. Required for copper delivery into the thylakoids lumen, which is essential for the function of copper proteins. In Arabidopsis thaliana (Mouse-ear cress), this protein is Copper-transporting ATPase PAA2, chloroplastic (PAA2).